The primary structure comprises 346 residues: Phosphate acyltransferase (346 aa).

This sequence belongs to the PlsX family. In terms of assembly, homodimer. Probably interacts with PlsY.

It localises to the cytoplasm. It carries out the reaction a fatty acyl-[ACP] + phosphate = an acyl phosphate + holo-[ACP]. It participates in lipid metabolism; phospholipid metabolism. Its function is as follows. Catalyzes the reversible formation of acyl-phosphate (acyl-PO(4)) from acyl-[acyl-carrier-protein] (acyl-ACP). This enzyme utilizes acyl-ACP as fatty acyl donor, but not acyl-CoA. In Geotalea daltonii (strain DSM 22248 / JCM 15807 / FRC-32) (Geobacter daltonii), this protein is Phosphate acyltransferase.